Here is a 467-residue protein sequence, read N- to C-terminus: Mitochondrial distribution and morphology protein 10 (467 aa).

The disordered stretch occupies residues 361-393; the sequence is GLPDTAPSRNRECDDLPPPRRDNYHHQRSPHAS. Positions 369–385 are enriched in basic and acidic residues; the sequence is RNRECDDLPPPRRDNYH.

The protein belongs to the MDM10 family. As to quaternary structure, component of the ER-mitochondria encounter structure (ERMES) or MDM complex, composed of MMM1, MDM10, MDM12 and MDM34. Associates with the mitochondrial outer membrane sorting assembly machinery SAM(core) complex.

It localises to the mitochondrion outer membrane. Component of the ERMES/MDM complex, which serves as a molecular tether to connect the endoplasmic reticulum and mitochondria. Components of this complex are involved in the control of mitochondrial shape and protein biogenesis and may function in phospholipid exchange. MDM10 is involved in the late assembly steps of the general translocase of the mitochondrial outer membrane (TOM complex). Functions in the TOM40-specific route of the assembly of outer membrane beta-barrel proteins, including the association of TOM40 with the receptor TOM22 and small TOM proteins. Can associate with the SAM(core) complex as well as the MDM12-MMM1 complex, both involved in late steps of the major beta-barrel assembly pathway, that is responsible for biogenesis of all outer membrane beta-barrel proteins. May act as a switch that shuttles between both complexes and channels precursor proteins into the TOM40-specific pathway. Plays a role in mitochondrial morphology and in the inheritance of mitochondria. In Ajellomyces capsulatus (strain NAm1 / WU24) (Darling's disease fungus), this protein is Mitochondrial distribution and morphology protein 10.